The primary structure comprises 517 residues: ATP synthase subunit alpha 2 (517 aa).

173–180 (GDRQTGKT) contributes to the ATP binding site.

The protein belongs to the ATPase alpha/beta chains family. In terms of assembly, F-type ATPases have 2 components, CF(1) - the catalytic core - and CF(0) - the membrane proton channel. CF(1) has five subunits: alpha(3), beta(3), gamma(1), delta(1), epsilon(1). CF(0) has three main subunits: a(1), b(2) and c(9-12). The alpha and beta chains form an alternating ring which encloses part of the gamma chain. CF(1) is attached to CF(0) by a central stalk formed by the gamma and epsilon chains, while a peripheral stalk is formed by the delta and b chains.

The protein resides in the cell inner membrane. It carries out the reaction ATP + H2O + 4 H(+)(in) = ADP + phosphate + 5 H(+)(out). In terms of biological role, produces ATP from ADP in the presence of a proton gradient across the membrane. The alpha chain is a regulatory subunit. In Legionella pneumophila subsp. pneumophila (strain Philadelphia 1 / ATCC 33152 / DSM 7513), this protein is ATP synthase subunit alpha 2.